A 220-amino-acid polypeptide reads, in one-letter code: Ribonuclease HII (220 aa).

Positions 32–220 (KHIAGIDEAG…FAPIKGRFDC (189 aa)) constitute an RNase H type-2 domain. The a divalent metal cation site is built by Asp-38, Glu-39, and Asp-130.

Belongs to the RNase HII family. It depends on Mn(2+) as a cofactor. Mg(2+) serves as cofactor.

It is found in the cytoplasm. The catalysed reaction is Endonucleolytic cleavage to 5'-phosphomonoester.. Its function is as follows. Endonuclease that specifically degrades the RNA of RNA-DNA hybrids. The protein is Ribonuclease HII of Brucella canis (strain ATCC 23365 / NCTC 10854 / RM-666).